A 426-amino-acid chain; its full sequence is Serine hydroxymethyltransferase (426 aa).

(6S)-5,6,7,8-tetrahydrofolate-binding positions include Leu111 and Gly115–Leu117. N6-(pyridoxal phosphate)lysine is present on Lys220.

This sequence belongs to the SHMT family. Homodimer. It depends on pyridoxal 5'-phosphate as a cofactor.

The protein localises to the cytoplasm. The catalysed reaction is (6R)-5,10-methylene-5,6,7,8-tetrahydrofolate + glycine + H2O = (6S)-5,6,7,8-tetrahydrofolate + L-serine. The protein operates within one-carbon metabolism; tetrahydrofolate interconversion. It functions in the pathway amino-acid biosynthesis; glycine biosynthesis; glycine from L-serine: step 1/1. Functionally, catalyzes the reversible interconversion of serine and glycine with tetrahydrofolate (THF) serving as the one-carbon carrier. This reaction serves as the major source of one-carbon groups required for the biosynthesis of purines, thymidylate, methionine, and other important biomolecules. Also exhibits THF-independent aldolase activity toward beta-hydroxyamino acids, producing glycine and aldehydes, via a retro-aldol mechanism. This Orientia tsutsugamushi (strain Ikeda) (Rickettsia tsutsugamushi) protein is Serine hydroxymethyltransferase.